A 419-amino-acid polypeptide reads, in one-letter code: UDP-N-acetylglucosamine 1-carboxyvinyltransferase (419 aa).

Lys-22–Asn-23 is a binding site for phosphoenolpyruvate. Arg-93 contributes to the UDP-N-acetyl-alpha-D-glucosamine binding site. Residue Cys-117 is the Proton donor of the active site. A 2-(S-cysteinyl)pyruvic acid O-phosphothioketal modification is found at Cys-117. Residues Asp-306 and Ile-328 each contribute to the UDP-N-acetyl-alpha-D-glucosamine site.

Belongs to the EPSP synthase family. MurA subfamily.

It localises to the cytoplasm. It catalyses the reaction phosphoenolpyruvate + UDP-N-acetyl-alpha-D-glucosamine = UDP-N-acetyl-3-O-(1-carboxyvinyl)-alpha-D-glucosamine + phosphate. It participates in cell wall biogenesis; peptidoglycan biosynthesis. Cell wall formation. Adds enolpyruvyl to UDP-N-acetylglucosamine. The chain is UDP-N-acetylglucosamine 1-carboxyvinyltransferase from Idiomarina loihiensis (strain ATCC BAA-735 / DSM 15497 / L2-TR).